The sequence spans 247 residues: Anamorsin homolog (247 aa).

The N-terminal SAM-like domain stretch occupies residues 4–128 (FKGLQKSLYI…ETGSSARLSF (125 aa)). Residues 129–160 (AKKNASALNVWKISGDDEELIDEEDLLDEEDK) are linker. Residues cysteine 171, cysteine 180, cysteine 183, and cysteine 185 each contribute to the [2Fe-2S] cluster site. The segment at 171–185 (CSTTGKRKACKNCSC) is fe-S binding site A. The [4Fe-4S] cluster site is built by cysteine 208, cysteine 211, cysteine 219, and cysteine 222. 2 short sequence motifs (cx2C motif) span residues 208-211 (CGNC) and 219-222 (CSTC). The fe-S binding site B stretch occupies residues 208–222 (CGNCYLGDAFRCSTC).

It belongs to the anamorsin family. As to quaternary structure, monomer. Requires [2Fe-2S] cluster as cofactor. [4Fe-4S] cluster is required as a cofactor.

Its subcellular location is the cytoplasm. The protein localises to the mitochondrion intermembrane space. Functionally, component of the cytosolic iron-sulfur (Fe-S) protein assembly (CIA) machinery. Required for the maturation of extramitochondrial Fe-S proteins. Part of an electron transfer chain functioning in an early step of cytosolic Fe-S biogenesis, facilitating the de novo assembly of a [4Fe-4S] cluster on the cytosolic Fe-S scaffold complex. Electrons are transferred from NADPH via a FAD- and FMN-containing diflavin oxidoreductase. Together with the diflavin oxidoreductase, also required for the assembly of the diferric tyrosyl radical cofactor of ribonucleotide reductase (RNR), probably by providing electrons for reduction during radical cofactor maturation in the catalytic small subunit. The sequence is that of Anamorsin homolog from Drosophila persimilis (Fruit fly).